A 465-amino-acid polypeptide reads, in one-letter code: MLKIYNSLTRQKEEFRPLEPRRVRMYVCGMTVYDYCHLGHARVMVVFDMVARYLRHLGLKVTYVRNVTDIDDKIIRRAVENGETIGALTARFIEAMHEDERALGVLPPDHEPRATESIDDILAMIGTLIERGHAYVGSNGDVFYAVASFPNYGRLSGKNLDELRAGERIEVDEAKRDPLDFVLWKSAKPGEPFWASPWGPGRPGWHIECSAMSTRCLGAHFDIHGGGMDLQFPHHENEIAQSEGATGEHFVNYWMHNGFVRINEEKMSKSLGNFFTVREILARYRPEVVRFFILNSHYRSPLNYSDENLDEAAAALSRLYTALRGLAPDLPLPLGEDRDEGFSSRFADAMQDDFNTPEAIAVLFDLAREINRHKAAEPAKAAALGATLKSLGNVLGLLQTDPEAYFKSDAGGSGLSDADIETRIRARLEARKAKNWAESDRIRDELKAQGIILEDSAAGTTWRRE.

C28 is a Zn(2+) binding site. A 'HIGH' region motif is present at residues 30–40 (MTVYDYCHLGH). Zn(2+) is bound by residues C209, H234, and E238. The 'KMSKS' region motif lies at 266–270 (KMSKS). K269 contacts ATP.

Belongs to the class-I aminoacyl-tRNA synthetase family. As to quaternary structure, monomer. Zn(2+) is required as a cofactor.

It is found in the cytoplasm. The catalysed reaction is tRNA(Cys) + L-cysteine + ATP = L-cysteinyl-tRNA(Cys) + AMP + diphosphate. The polypeptide is Cysteine--tRNA ligase (Methylococcus capsulatus (strain ATCC 33009 / NCIMB 11132 / Bath)).